Consider the following 216-residue polypeptide: Pyrophosphatase PpaX (216 aa).

Asp-9 (nucleophile) is an active-site residue.

This sequence belongs to the HAD-like hydrolase superfamily. PpaX family. Mg(2+) is required as a cofactor.

The catalysed reaction is diphosphate + H2O = 2 phosphate + H(+). In terms of biological role, hydrolyzes pyrophosphate formed during P-Ser-HPr dephosphorylation by HPrK/P. Might play a role in controlling the intracellular pyrophosphate pool. The polypeptide is Pyrophosphatase PpaX (Bacillus cereus (strain B4264)).